We begin with the raw amino-acid sequence, 811 residues long: Receptor-like protein 52 (811 aa).

Residues 1 to 22 (MTFLPLLFIFFFLTSIPFPAFS) form the signal peptide. At 23–770 (QYNDRSTLLN…EDEEEVMNWT (748 aa)) the chain is on the extracellular side. N-linked (GlcNAc...) asparagine glycosylation is found at Asn47, Asn64, Asn74, Asn93, Asn109, and Asn124. 6 LRR repeats span residues 62–86 (AGNV…ICNF), 87–110 (PNLK…LYNC), 112–134 (KLQY…INRL), 135–159 (APKL…IGRI), 161–183 (KLKV…IGDL), and 184–208 (SELE…EFGK). The LRR 7; degenerate repeat unit spans residues 211-233 (KLKYMWLEEMNLIGEISAVVFEN). Residues Asn233, Asn246, Asn260, Asn295, and Asn304 are each glycosylated (N-linked (GlcNAc...) asparagine). LRR repeat units follow at residues 234-258 (MTDL…LFGL), 260-281 (NLTE…SISA), 282-305 (KNLV…IGNL), 307-329 (NLEL…IGKL), 330-354 (PELK…GFIS), 356-377 (LERF…LCHG), 379-401 (KLQS…LGDC), and 403-427 (TLSS…TRSN). Residues Asn389, Asn422, Asn429, Asn455, Asn464, and Asn485 are each glycosylated (N-linked (GlcNAc...) asparagine). 10 LRR repeats span residues 441 to 465 (LHSL…IANL), 466 to 489 (STLE…ISTS), 491 to 511 (KSID…LVRI), 512 to 537 (SSLE…SMQQ), 539 to 557 (QVLV…QNGF), 558 to 581 (SKLR…FFVN), 625 to 649 (LNTF…VGLL), 650 to 673 (KELH…MGNL), 674 to 697 (IELE…LGKL), and 699 to 722 (YLAY…QFQT). N-linked (GlcNAc...) asparagine glycosylation occurs at Asn525. Asn571 and Asn581 each carry an N-linked (GlcNAc...) asparagine glycan. N-linked (GlcNAc...) asparagine glycosylation is present at Asn656. An N-linked (GlcNAc...) asparagine glycan is attached at Asn704. A helical membrane pass occupies residues 771–791 (AAAIGSIPGISIGLTMGYILV). Residues 792–811 (SYKPEWLMNSGRNKRRIKPI) are Cytoplasmic-facing.

It belongs to the RLP family.

The protein resides in the cell membrane. Required for defense against powdery mildew pathogen. This Arabidopsis thaliana (Mouse-ear cress) protein is Receptor-like protein 52.